A 517-amino-acid chain; its full sequence is Crotonobetaine/carnitine--CoA ligase (517 aa).

Belongs to the ATP-dependent AMP-binding enzyme family.

It catalyses the reaction 4-(trimethylamino)butanoate + ATP + CoA = 4-(trimethylamino)butanoyl-CoA + AMP + diphosphate. The enzyme catalyses crotonobetaine + ATP + CoA = crotonobetainyl-CoA + AMP + diphosphate. The catalysed reaction is (R)-carnitine + ATP + CoA = (R)-carnitinyl-CoA + AMP + diphosphate. It participates in amine and polyamine metabolism; carnitine metabolism. Catalyzes the transfer of CoA to carnitine, generating the initial carnitinyl-CoA needed for the CaiB reaction cycle. Also has activity toward crotonobetaine and gamma-butyrobetaine. This is Crotonobetaine/carnitine--CoA ligase from Escherichia coli O127:H6 (strain E2348/69 / EPEC).